Reading from the N-terminus, the 315-residue chain is Borealin (315 aa).

Disordered regions lie at residues I103–G126 and L138–M226. The residue at position 146 (T146) is a Phosphothreonine. Residue S152 is modified to Phosphoserine. Residues A153–R162 are compositionally biased toward basic residues. A Phosphoserine modification is found at S163. A compositionally biased stretch (low complexity) spans S178–N188. The residue at position 205 (S205) is a Phosphoserine. A Phosphothreonine modification is found at T209. Phosphoserine is present on residues S218, S220, and S244.

It belongs to the borealin family. As to quaternary structure, component of the CPC complex. Ubiquitously expressed in the early embryo. Expression is restricted to the ventral nerve cord and brain during later embryonic stages.

It localises to the nucleus. The protein localises to the chromosome. It is found in the centromere. The protein resides in the cytoplasm. Its subcellular location is the cytoskeleton. It localises to the spindle. In terms of biological role, component of the chromosomal passenger complex (CPC), a complex that acts as a key regulator of embryonic mitosis. The CPC complex has essential functions at the centromere for ensuring sister chromatid cohesion, recruitment of the CPC to kinetochores, and chromosome alignment and segregation. There is no function in meiotic histone phosphorylation or spindle formation. The sequence is that of Borealin (borr) from Drosophila melanogaster (Fruit fly).